Here is a 684-residue protein sequence, read N- to C-terminus: MARRKNFKKGNKKTFGARDDSRAQKNWSELVKENEKWEKYYKTLALFPEDQWEEFKKTCQAPLPLTFRITGSRKHAGEVLNLFKERHLPNLTNVEFEGEKIKAPVELPWYPDHLAWQLDVPKTVIRKNEQFAKTQRFLVVENAVGNISRQEAVSMIPPIVLEVKPHHTVLDMCAAPGSKTAQLIEALHKDTDEPSGFVVANDADARRSHMLVHQLKRLNSANLMVVNHDAQFFPRIRLHGNSNNKNDVLKFDRILCDVPCSGDGTMRKNVNVWKDWNTQAGLGLHAVQLNILNRGLHLLKNNGRLVYSTCSLNPIENEAVVAEALRKWGDKIRLVNCDDKLPGLIRSKGVSKWPVYDRNLTEKTKGDEGTLDSFFSPSEEEASKFNLQNCMRVYPHQQNTGGFFITVFEKVEDSTEAATEKLSSETPALESEGPQTKKIKVEEVQKKERLPRDANEEPFVFVDPQHEALKVCWDFYGIDNIFDRNTCLVRNATGEPTRVVYTVCPALKDVIQANDDRLKIIYSGVKLFVSQRSDIECSWRIQSESLPIMKHHMKSNRIVEANLEMLKHLLIESFPNFDDIRSKNIDNDFVEKMTKLSSGCAFIDVSRNDPAKENLFLPVWKGNKCINLMVCKEDTHELLYRIFGIDANAKATPSAEEKEKEKETTESPAETTTGTSTEAPSAAN.

The segment covering 1 to 12 (MARRKNFKKGNK) has biased composition (basic residues). The tract at residues 1–24 (MARRKNFKKGNKKTFGARDDSRAQ) is disordered. S-adenosyl-L-methionine-binding positions include 173–179 (CAAPGSK), D202, D229, and D257. The Nucleophile role is filled by C310. T426 is subject to Phosphothreonine. S431 bears the Phosphoserine mark. Residues 650-684 (KATPSAEEKEKEKETTESPAETTTGTSTEAPSAAN) form a disordered region. Residues 655 to 665 (AEEKEKEKETT) are compositionally biased toward basic and acidic residues. Positions 666–684 (ESPAETTTGTSTEAPSAAN) are enriched in low complexity. S667 bears the Phosphoserine mark.

This sequence belongs to the class I-like SAM-binding methyltransferase superfamily. RsmB/NOP family. TRM4 subfamily.

It is found in the nucleus. It localises to the nucleolus. It catalyses the reaction cytidine(34) in tRNA precursor + S-adenosyl-L-methionine = 5-methylcytidine(34) in tRNA precursor + S-adenosyl-L-homocysteine + H(+). The enzyme catalyses cytidine(40) in tRNA precursor + S-adenosyl-L-methionine = 5-methylcytidine(40) in tRNA precursor + S-adenosyl-L-homocysteine + H(+). It carries out the reaction cytidine(48) in tRNA + S-adenosyl-L-methionine = 5-methylcytidine(48) in tRNA + S-adenosyl-L-homocysteine + H(+). The catalysed reaction is cytidine(49) in tRNA + S-adenosyl-L-methionine = 5-methylcytidine(49) in tRNA + S-adenosyl-L-homocysteine + H(+). Its function is as follows. Methylates cytosine to m5C at several positions in different tRNAs and pre-tRNAs containing intron. Able to modify tRNAs at all four positions (34, 40, 48 and 49) at which m5C has been found in tRNAs. May be involved in ribosome biogenesis as its disruption leads to increased sensitivity to the antibiotic paromomycin. The chain is Multisite-specific tRNA:(cytosine-C(5))-methyltransferase (NCL1) from Saccharomyces cerevisiae (strain ATCC 204508 / S288c) (Baker's yeast).